We begin with the raw amino-acid sequence, 1024 residues long: Hemolysin, plasmid (1024 aa).

Over residues alanine 20–lysine 32 the composition is skewed to polar residues. The segment at alanine 20–alanine 39 is disordered. Transmembrane regions (helical) follow at residues isoleucine 238–asparagine 260, lysine 268–alanine 327, and aspartate 365–glutamate 411. 2 N6-myristoyl lysine lipidation sites follow: lysine 564 and lysine 690. Hemolysin-type calcium-binding repeat units lie at residues phenylalanine 732 to isoleucine 749, glutamate 750 to leucine 767, serine 768 to leucine 785, isoleucine 786 to phenylalanine 803, phenylalanine 816 to leucine 833, and aspartate 834 to tyrosine 851.

Belongs to the RTX prokaryotic toxin (TC 1.C.11) family. In terms of processing, myristoylated by HlyC; the toxin only becomes active when modified. Mainly myristoylated, while a minor fraction is acylated with pentadecanoyl (C15:0; 26%) and heptadecanoyl (C17:0; 6%) fatty acyl groups. Fatty acylation is involved in binding to host membranes and promotes the irreversible insertion of Hemolysin into the host cell membrane. Can be activated by both myristoylation and palmitoylation, but HlyC catalyzes lysine myristoylation.

Its subcellular location is the secreted. It is found in the host cell membrane. In terms of biological role, bacterial hemolysins are exotoxins that attack blood cell membranes and cause cell rupture by forming a pore. The polypeptide is Hemolysin, plasmid (Escherichia coli).